Consider the following 229-residue polypeptide: Uracil-DNA glycosylase (229 aa).

Asp70 (proton acceptor) is an active-site residue.

Belongs to the uracil-DNA glycosylase (UDG) superfamily. UNG family.

It is found in the cytoplasm. The enzyme catalyses Hydrolyzes single-stranded DNA or mismatched double-stranded DNA and polynucleotides, releasing free uracil.. In terms of biological role, excises uracil residues from the DNA which can arise as a result of misincorporation of dUMP residues by DNA polymerase or due to deamination of cytosine. The sequence is that of Uracil-DNA glycosylase from Chlamydia abortus (strain DSM 27085 / S26/3) (Chlamydophila abortus).